Here is a 75-residue protein sequence, read N- to C-terminus: Large ribosomal subunit protein uL29 (75 aa).

Belongs to the universal ribosomal protein uL29 family.

This chain is Large ribosomal subunit protein uL29, found in Ureaplasma urealyticum serovar 10 (strain ATCC 33699 / Western).